A 73-amino-acid polypeptide reads, in one-letter code: Tetrahydromethanopterin S-methyltransferase subunit F (73 aa).

Residues 52-72 (IGFAAGFLFSLLMVIVLPLLF) form a helical membrane-spanning segment.

It belongs to the MtrF family. In terms of assembly, the complex is composed of 8 subunits; MtrA, MtrB, MtrC, MtrD, MtrE, MtrF, MtrG and MtrH.

It is found in the cell membrane. It carries out the reaction 5-methyl-5,6,7,8-tetrahydromethanopterin + coenzyme M + 2 Na(+)(in) = 5,6,7,8-tetrahydromethanopterin + methyl-coenzyme M + 2 Na(+)(out). The protein operates within one-carbon metabolism; methanogenesis from CO(2); methyl-coenzyme M from 5,10-methylene-5,6,7,8-tetrahydromethanopterin: step 2/2. Part of a complex that catalyzes the formation of methyl-coenzyme M and tetrahydromethanopterin from coenzyme M and methyl-tetrahydromethanopterin. This is an energy-conserving, sodium-ion translocating step. The protein is Tetrahydromethanopterin S-methyltransferase subunit F of Methanosarcina barkeri (strain Fusaro / DSM 804).